The following is a 240-amino-acid chain: HTH-type transcriptional repressor STM4068 (240 aa).

The 69-residue stretch at 9–77 (TPLYKQLFFI…RGSGSVVCSV (69 aa)) folds into the HTH gntR-type domain. Residues 37–56 (QKEIARSYNVSLIVVKQAWS) constitute a DNA-binding region (H-T-H motif).

In terms of biological role, represses the expression of the STM4065-STM4067 operon. The polypeptide is HTH-type transcriptional repressor STM4068 (Salmonella typhimurium (strain LT2 / SGSC1412 / ATCC 700720)).